A 254-amino-acid chain; its full sequence is Indole-3-glycerol phosphate synthase (254 aa).

Belongs to the TrpC family.

The catalysed reaction is 1-(2-carboxyphenylamino)-1-deoxy-D-ribulose 5-phosphate + H(+) = (1S,2R)-1-C-(indol-3-yl)glycerol 3-phosphate + CO2 + H2O. It functions in the pathway amino-acid biosynthesis; L-tryptophan biosynthesis; L-tryptophan from chorismate: step 4/5. This Methanopyrus kandleri (strain AV19 / DSM 6324 / JCM 9639 / NBRC 100938) protein is Indole-3-glycerol phosphate synthase.